The following is a 347-amino-acid chain: Dual specificity mitogen-activated protein kinase kinase mek-1 (347 aa).

Residues 1–42 form a disordered region; the sequence is MERDFDLGMGRPGGLGGLGGEPIMQQMPQPAPHHPSRSSNDH. Gly residues predominate over residues 10–20; the sequence is GRPGGLGGLGG. Positions 72–325 constitute a Protein kinase domain; the sequence is LQFVEDIGHG…YDMLLQHPFV (254 aa). ATP is bound by residues 78 to 86 and Lys99; that span reads IGHGSCGTV. The active-site Proton acceptor is Asp193. Phosphoserine is present on residues Ser221 and Ser225.

The protein belongs to the protein kinase superfamily. STE Ser/Thr protein kinase family. MAP kinase kinase subfamily. Interacts with shc-1; the interaction is independent of mek-1 catalytic activity, is constitutive and may facilitate mlk-1-mediated phosphorylation by bringing mlk-1 and mek-1 together. Requires Mg(2+) as cofactor. Post-translationally, may be phosphorylated at Ser-221 and/or Ser-225 by mlk-1. Expressed in pharyngeal muscles, uterine endothelial cells, intestine and in neurons of ring ganglia, ventral ganglion and ganglia around anus. Expressed also in hypodermis and body muscles.

It catalyses the reaction L-seryl-[protein] + ATP = O-phospho-L-seryl-[protein] + ADP + H(+). It carries out the reaction L-threonyl-[protein] + ATP = O-phospho-L-threonyl-[protein] + ADP + H(+). The enzyme catalyses L-tyrosyl-[protein] + ATP = O-phospho-L-tyrosyl-[protein] + ADP + H(+). Its activity is regulated as follows. May be activated by phosphorylation at Ser-221 and Ser-225. Its function is as follows. Dual specificity protein kinase which may phosphorylate kgb-1 and thereby is an essential component of the JNK pathway composed of mlk-1, mek-1 and kgb-1. May also have a synergistic role with sek-1 in phosphorylating pmk-1. Involved in the response to environmental stress including heavy metal ions (Cu(2+) and Cd(2+)), oxidative stress and starvation. In association with sek-1, regulates germline cell apoptosis in response to oxidative, osmotic and heat shock stresses. Involved in resistance to pathogenic bacteria infection. Involved in axon regeneration after injury. The protein is Dual specificity mitogen-activated protein kinase kinase mek-1 of Caenorhabditis elegans.